The sequence spans 340 residues: Glycerol-3-phosphate dehydrogenase [NAD(P)+] (340 aa).

NADPH contacts are provided by Ser-11, Trp-12, Arg-33, and Lys-106. The sn-glycerol 3-phosphate site is built by Lys-106, Gly-137, and Ser-139. Position 141 (Ala-141) interacts with NADPH. Positions 192, 245, 255, 256, and 257 each coordinate sn-glycerol 3-phosphate. Lys-192 serves as the catalytic Proton acceptor. Arg-256 is an NADPH binding site. Positions 280 and 282 each coordinate NADPH.

This sequence belongs to the NAD-dependent glycerol-3-phosphate dehydrogenase family.

The protein localises to the cytoplasm. The enzyme catalyses sn-glycerol 3-phosphate + NAD(+) = dihydroxyacetone phosphate + NADH + H(+). It catalyses the reaction sn-glycerol 3-phosphate + NADP(+) = dihydroxyacetone phosphate + NADPH + H(+). Its pathway is membrane lipid metabolism; glycerophospholipid metabolism. Functionally, catalyzes the reduction of the glycolytic intermediate dihydroxyacetone phosphate (DHAP) to sn-glycerol 3-phosphate (G3P), the key precursor for phospholipid synthesis. This Bacillus anthracis (strain A0248) protein is Glycerol-3-phosphate dehydrogenase [NAD(P)+].